We begin with the raw amino-acid sequence, 318 residues long: Homoserine kinase (318 aa).

Residue 97 to 107 (PIGSGLGSSAC) participates in ATP binding.

This sequence belongs to the GHMP kinase family. Homoserine kinase subfamily.

The protein localises to the cytoplasm. It carries out the reaction L-homoserine + ATP = O-phospho-L-homoserine + ADP + H(+). It participates in amino-acid biosynthesis; L-threonine biosynthesis; L-threonine from L-aspartate: step 4/5. Functionally, catalyzes the ATP-dependent phosphorylation of L-homoserine to L-homoserine phosphate. This is Homoserine kinase from Aliivibrio fischeri (strain MJ11) (Vibrio fischeri).